The primary structure comprises 171 residues: Shikimate kinase (171 aa).

14–19 provides a ligand contact to ATP; the sequence is GAGKST. A Mg(2+)-binding site is contributed by S18. The substrate site is built by D36, R60, and G82. Residue R120 participates in ATP binding. R139 contacts substrate. ATP is bound at residue Q156.

Belongs to the shikimate kinase family. Monomer. Mg(2+) serves as cofactor.

It localises to the cytoplasm. It carries out the reaction shikimate + ATP = 3-phosphoshikimate + ADP + H(+). The protein operates within metabolic intermediate biosynthesis; chorismate biosynthesis; chorismate from D-erythrose 4-phosphate and phosphoenolpyruvate: step 5/7. Its function is as follows. Catalyzes the specific phosphorylation of the 3-hydroxyl group of shikimic acid using ATP as a cosubstrate. In Pseudoalteromonas atlantica (strain T6c / ATCC BAA-1087), this protein is Shikimate kinase.